The sequence spans 1091 residues: Ninein homolog (1091 aa).

The tract at residues methionine 1–serine 361 is sufficient for binding to microtubules. Disordered regions lie at residues tyrosine 100–proline 216, alanine 456–glutamate 483, lysine 525–threonine 602, and lysine 616–glutamine 639. Phosphoserine is present on residues serine 103, serine 107, serine 108, serine 113, and serine 141. Threonine 144 carries the post-translational modification Phosphothreonine. The segment covering valine 168 to leucine 177 has biased composition (polar residues). A sufficient for interaction with ens region spans residues leucine 487–alanine 526. Composition is skewed to basic and acidic residues over residues lysine 527 to aspartate 537 and arginine 547 to arginine 563. Phosphoserine is present on serine 594. Residues lysine 616 to glutamate 634 are compositionally biased toward basic and acidic residues. Residues serine 701 and serine 714 each carry the phosphoserine modification. The tract at residues alanine 799 to serine 919 is disordered. Residues serine 822–glutamate 845 are compositionally biased toward polar residues. Positions serine 846 to asparagine 860 are enriched in low complexity. Over residues glutamate 894–leucine 913 the composition is skewed to polar residues.

In terms of assembly, interacts with ens.

Its subcellular location is the cytoplasm. It is found in the cytoskeleton. The protein resides in the microtubule organizing center. It localises to the centrosome. The protein localises to the perinuclear region. Its function is as follows. Required for the positioning and anchorage of the microtubule minus-ends in various cells. In fat body cells, part of perinuclear non-centrosomal microtubule-organizing centers (ncMTOCs) which function to accommodate the organization of microtubule (MT) networks to control nuclear positioning and dynein motor-based retrograde endosomal trafficking. Within the ncMTOCs, Msp300 and shot anchors the ncMTOC at the nuclear surface and recruits the MT minus-end regulators Patronin and Nin for assembly, anchoring and/or stabilization of circumferential and radial MTs at the ncMTOC. This protein may also function with Patronin to recruit msps to the ncMTOC for the gamma-tubulin-independent elongation of radial MTs. In embryonic myotubes and larval myofibers, functions with ens to regulate myonuclear positioning and, as a consequence, is involved in muscle development. Likely functions by positively regulating ens. Essential for embryogenesis, likely by contributing to accurate chromosome segregation during early embryonic nuclear divisions. However, other reports found that it is not essential for embryogenesis or embryonic cellular divisions. The sequence is that of Ninein homolog from Drosophila melanogaster (Fruit fly).